The sequence spans 201 residues: Recombination protein RecR (201 aa).

A C4-type zinc finger spans residues 57–72 (CKYCSNFGNKDECDIC). Residues 80–176 (TKLMIVTTNE…QIYRIGFGIP (97 aa)) form the Toprim domain.

The protein belongs to the RecR family.

Functionally, may play a role in DNA repair. It seems to be involved in an RecBC-independent recombinational process of DNA repair. It may act with RecF and RecO. The chain is Recombination protein RecR from Ureaplasma urealyticum serovar 10 (strain ATCC 33699 / Western).